A 176-amino-acid chain; its full sequence is Adenine phosphoribosyltransferase (176 aa).

This sequence belongs to the purine/pyrimidine phosphoribosyltransferase family. In terms of assembly, homodimer.

The protein localises to the cytoplasm. The enzyme catalyses AMP + diphosphate = 5-phospho-alpha-D-ribose 1-diphosphate + adenine. Its pathway is purine metabolism; AMP biosynthesis via salvage pathway; AMP from adenine: step 1/1. Functionally, catalyzes a salvage reaction resulting in the formation of AMP, that is energically less costly than de novo synthesis. This chain is Adenine phosphoribosyltransferase, found in Thermobifida fusca (strain YX).